The sequence spans 42 residues: Photosystem I reaction center subunit IX (42 aa).

A helical membrane pass occupies residues 7 to 27 (YLSTAPVLSALWFAILAGLLI).

This sequence belongs to the PsaJ family.

The protein resides in the plastid. The protein localises to the chloroplast thylakoid membrane. Its function is as follows. May help in the organization of the PsaE and PsaF subunits. In Chlorokybus atmophyticus (Soil alga), this protein is Photosystem I reaction center subunit IX.